We begin with the raw amino-acid sequence, 659 residues long: Polyamine transporter 4 (659 aa).

Polar residues-rich tracts occupy residues 1-20 and 28-45; these read MPSS…NIQQ and NVTN…TGSI. Residues 1 to 81 are disordered; it reads MPSSLTKTES…LDWDGPDDPD (81 aa). Residues 1 to 99 are Cytoplasmic-facing; it reads MPSSLTKTES…KKWYTTMTSA (99 aa). The helical transmembrane segment at 100–120 threads the bilayer; that stretch reads FLCLVVTMGSSLYVSSVPELV. Residues 121–128 are Extracellular-facing; the sequence is ERYHVSQT. Residues 129–149 form a helical membrane-spanning segment; it reads LALAGLTFYLLGLSTVIGAPL. Residues 150 to 157 lie on the Cytoplasmic side of the membrane; that stretch reads SEVFGRKP. A helical transmembrane segment spans residues 158–178; sequence VYLFSLPVSMLFTMGVGLSNG. Topologically, residues 179-187 are extracellular; that stretch reads HMRIILPLR. The helical transmembrane segment at 188 to 208 threads the bilayer; that stretch reads FLSGVFASPALSVGSGTILDI. At 209–215 the chain is on the cytoplasmic side; that stretch reads FDVDQVS. The chain crosses the membrane as a helical span at residues 216–236; the sequence is VAMTYFVLSPFLGPVLSPIMA. At 237 to 246 the chain is on the extracellular side; sequence GFATEAKGWR. A helical membrane pass occupies residues 247-267; sequence WSEWIQLIAGGLILPFIALMP. The Cytoplasmic segment spans residues 268-316; that stretch reads ETHKGIILRKRAKKRNIALKKFSREAQKEFLKTTVTITILRPLKMLVVE. A helical transmembrane segment spans residues 317–337; that stretch reads PIVFVFSVYVAFIFAILFGFF. Residues 338–355 are Extracellular-facing; that stretch reads EAYAVIYRGVYHMSMGIS. Residues 356-376 form a helical membrane-spanning segment; sequence GLPFIGIGVGLWIGAFFYLYI. Residues 377 to 423 lie on the Cytoplasmic side of the membrane; the sequence is DRKYLFPKPPAGTQPLTEKERTSKRTTPYRGARDAETGELLPVVPEK. A disordered region spans residues 387-408; that stretch reads AGTQPLTEKERTSKRTTPYRGA. A helical transmembrane segment spans residues 424–444; sequence FLIACKFGSVALPIGLFWQAW. At 445-456 the chain is on the extracellular side; it reads TARSDVHWMAPV. The chain crosses the membrane as a helical span at residues 457-477; sequence AAGVPFGFGLILIFFSVLMYF. Residues 478–486 are Cytoplasmic-facing; it reads STCYPPLTV. The helical transmembrane segment at 487-509 threads the bilayer; sequence ASCLAANNLLRYVMSSVFPLFTI. Topologically, residues 510–518 are extracellular; the sequence is QMYTKMKIK. The helical transmembrane segment at 519-539 threads the bilayer; sequence WASTLFALVCVVMIPIPWVFE. At 540-659 the chain is on the cytoplasmic side; it reads KWGSKLRHKS…MATDASARMV (120 aa). A compositionally biased stretch (basic and acidic residues) spans 587 to 602; sequence METDPSTREKPGERLS. Residues 587–631 form a disordered region; sequence METDPSTREKPGERLSLRRTHTQPVPASFDREDGQHAQNRNEPIS. 3 positions are modified to phosphothreonine: threonine 589, threonine 606, and threonine 608. Positions 622-631 are enriched in polar residues; the sequence is HAQNRNEPIS. Residues serine 633 and serine 646 each carry the phosphoserine modification.

Belongs to the major facilitator superfamily. DHA1 family. Polyamines/proton antiporter (TC 2.A.1.2.16) subfamily.

It localises to the cell membrane. Its function is as follows. Cell membrane polyamine/proton antiporter, involved in the detoxification of excess polyamines in the cytoplasm. Recognizes spermidine, spermine and the antimalarial drug quinidine, but not quinine, chloroquine and mefloquine. The protein is Polyamine transporter 4 (TPO4) of Saccharomyces cerevisiae (strain ATCC 204508 / S288c) (Baker's yeast).